The following is a 107-amino-acid chain: Phosphoribosyl-ATP pyrophosphatase (107 aa).

This sequence belongs to the PRA-PH family.

Its subcellular location is the cytoplasm. The catalysed reaction is 1-(5-phospho-beta-D-ribosyl)-ATP + H2O = 1-(5-phospho-beta-D-ribosyl)-5'-AMP + diphosphate + H(+). The protein operates within amino-acid biosynthesis; L-histidine biosynthesis; L-histidine from 5-phospho-alpha-D-ribose 1-diphosphate: step 2/9. This is Phosphoribosyl-ATP pyrophosphatase from Sinorhizobium medicae (strain WSM419) (Ensifer medicae).